We begin with the raw amino-acid sequence, 425 residues long: G protein-activated inward rectifier potassium channel 2 (425 aa).

Residues Met1–Trp91 are Cytoplasmic-facing. Phosphoserine occurs at positions 18 and 25. The chain crosses the membrane as a helical span at residues Arg92–Ile116. The Extracellular portion of the chain corresponds to Ala117–Gly140. Residues Phe141–Glu152 constitute an intramembrane region (helical; Pore-forming). Positions Thr153–Tyr159 form an intramembrane region, pore-forming. The Selectivity filter motif lies at Thr154–Tyr159. Topologically, residues Arg160 to Glu168 are extracellular. The helical transmembrane segment at Gly169–Cys190 threads the bilayer. At Met191–Val425 the chain is on the cytoplasmic side. The segment at Asn392 to Val425 is disordered. Residues Glu422–Val425 carry the PDZ-binding motif.

It belongs to the inward rectifier-type potassium channel (TC 1.A.2.1) family. KCNJ6 subfamily. Associates with KCNJ3/GIRK1 or KCNJ5/GRIK4 to form a G-protein-activated heteromultimer pore-forming unit. The resulting inward current is much larger. Interacts (via PDZ-binding motif) with SNX27 (via PDZ domain); the interaction is required for recycling to the plasma membrane when endocytosed and prevent degradation in lysosomes. As to expression, pancreatic beta cells and brain.

It localises to the membrane. The catalysed reaction is K(+)(in) = K(+)(out). Its activity is regulated as follows. Activated by phosphatidylinositol 4,5 biphosphate (PtdIns(4,5)P2). Functionally, inward rectifier potassium channels are characterized by a greater tendency to allow potassium to flow into the cell rather than out of it. Their voltage dependence is regulated by the concentration of extracellular potassium; as external potassium is raised, the voltage range of the channel opening shifts to more positive voltages. The inward rectification is mainly due to the blockage of outward current by internal magnesium. This potassium channel may be involved in the regulation of insulin secretion by glucose and/or neurotransmitters acting through G-protein-coupled receptors. The sequence is that of G protein-activated inward rectifier potassium channel 2 (Kcnj6) from Rattus norvegicus (Rat).